Consider the following 205-residue polypeptide: Methylamine utilization protein MauD (205 aa).

Residues 5–25 traverse the membrane as a helical segment; the sequence is FLIASNVLLWLALIGCAVLML. The 135-residue stretch at 50–184 folds into the Thioredoxin domain; the sequence is PDVGDAAPTF…LESLLEADKS (135 aa).

Its subcellular location is the membrane. Its pathway is one-carbon metabolism; methylamine degradation. May be specifically involved in the processing, transport, and/or maturation of the MADH beta-subunit. The sequence is that of Methylamine utilization protein MauD (mauD) from Methylorubrum extorquens (strain ATCC 14718 / DSM 1338 / JCM 2805 / NCIMB 9133 / AM1) (Methylobacterium extorquens).